We begin with the raw amino-acid sequence, 230 residues long: Cytidylate kinase (230 aa).

Residue 16–24 participates in ATP binding; that stretch reads GPASAGKST.

It belongs to the cytidylate kinase family. Type 1 subfamily.

The protein localises to the cytoplasm. It catalyses the reaction CMP + ATP = CDP + ADP. The catalysed reaction is dCMP + ATP = dCDP + ADP. The chain is Cytidylate kinase from Lactobacillus gasseri (strain ATCC 33323 / DSM 20243 / BCRC 14619 / CIP 102991 / JCM 1131 / KCTC 3163 / NCIMB 11718 / NCTC 13722 / AM63).